The chain runs to 173 residues: Nucleoside-triphosphatase THEP1 (173 aa).

Residues 9–16 and 97–104 each bind ATP; these read GPPGVGKT and LYVIDEVG.

It belongs to the THEP1 NTPase family.

The catalysed reaction is a ribonucleoside 5'-triphosphate + H2O = a ribonucleoside 5'-diphosphate + phosphate + H(+). Has nucleotide phosphatase activity towards ATP, GTP, CTP, TTP and UTP. May hydrolyze nucleoside diphosphates with lower efficiency. The protein is Nucleoside-triphosphatase THEP1 of Caldivirga maquilingensis (strain ATCC 700844 / DSM 13496 / JCM 10307 / IC-167).